The primary structure comprises 163 residues: 3-hydroxyacyl-[acyl-carrier-protein] dehydratase FabZ (163 aa).

The active site involves His61.

This sequence belongs to the thioester dehydratase family. FabZ subfamily.

It is found in the cytoplasm. It carries out the reaction a (3R)-hydroxyacyl-[ACP] = a (2E)-enoyl-[ACP] + H2O. Functionally, involved in unsaturated fatty acids biosynthesis. Catalyzes the dehydration of short chain beta-hydroxyacyl-ACPs and long chain saturated and unsaturated beta-hydroxyacyl-ACPs. The protein is 3-hydroxyacyl-[acyl-carrier-protein] dehydratase FabZ of Dinoroseobacter shibae (strain DSM 16493 / NCIMB 14021 / DFL 12).